A 285-amino-acid polypeptide reads, in one-letter code: Putative ABC transporter ATP-binding protein CPE0195 (285 aa).

The region spanning 6 to 242 (LKVEELNYNY…KEVIRKVNLR (237 aa)) is the ABC transporter domain. 39-46 (GGNGVGKS) contacts ATP.

Belongs to the ABC transporter superfamily.

The protein localises to the cell membrane. Functionally, probably part of an ABC transporter complex. Responsible for energy coupling to the transport system. In Clostridium perfringens (strain 13 / Type A), this protein is Putative ABC transporter ATP-binding protein CPE0195.